We begin with the raw amino-acid sequence, 401 residues long: MVNGSTQYLAHVGELSLKKGNRRQFEVQLERNLTLMLRSINPHVTVRAGRLYLSVPASFEAQTTAEQALSCLLGITGWAAATACPKTMEAITRCAHAEATLAAREGKRTFRIEARRADKRFCRTSSEIAREVGAVIHQSGALSVDLHYPDVVIFIEVREREAFLYGARRRGLRGLPCGVSGRGLLLLSGGIDSPVAGYRMLSRGMHIDCLYFHSYPYTPPEAQKKVEDLAKVLARYGLSTTLTVVSLTDIQKQLQTHAPAPSLTLLLRMCMMRIAEHVAREQRARCLITGESLAQVASQTLENLTVTSACTHLPIFRPLIGADKEDIIRTATEIGTYAISIRPYEDCCTLFAPKHPVLRPEVEEMQKQYQSLMLGPLLEDAFRTRKRTRIYGNYGVQESGE.

The 106-residue stretch at 63 to 168 folds into the THUMP domain; the sequence is TTAEQALSCL…EREAFLYGAR (106 aa). ATP contacts are provided by residues 186–187, 211–212, R268, G290, and Q299; these read LL and YF.

This sequence belongs to the ThiI family.

The protein resides in the cytoplasm. The catalysed reaction is [ThiI sulfur-carrier protein]-S-sulfanyl-L-cysteine + a uridine in tRNA + 2 reduced [2Fe-2S]-[ferredoxin] + ATP + H(+) = [ThiI sulfur-carrier protein]-L-cysteine + a 4-thiouridine in tRNA + 2 oxidized [2Fe-2S]-[ferredoxin] + AMP + diphosphate. It catalyses the reaction [ThiS sulfur-carrier protein]-C-terminal Gly-Gly-AMP + S-sulfanyl-L-cysteinyl-[cysteine desulfurase] + AH2 = [ThiS sulfur-carrier protein]-C-terminal-Gly-aminoethanethioate + L-cysteinyl-[cysteine desulfurase] + A + AMP + 2 H(+). The protein operates within cofactor biosynthesis; thiamine diphosphate biosynthesis. In terms of biological role, catalyzes the ATP-dependent transfer of a sulfur to tRNA to produce 4-thiouridine in position 8 of tRNAs, which functions as a near-UV photosensor. Also catalyzes the transfer of sulfur to the sulfur carrier protein ThiS, forming ThiS-thiocarboxylate. This is a step in the synthesis of thiazole, in the thiamine biosynthesis pathway. The sulfur is donated as persulfide by IscS. The chain is Probable tRNA sulfurtransferase from Treponema pallidum subsp. pallidum (strain SS14).